A 205-amino-acid chain; its full sequence is Spermatogenesis-associated protein 24 (205 aa).

Residues 17–166 adopt a coiled-coil conformation; sequence LAFDQLRDVI…QQRQSFRNHM (150 aa). The interval 138-185 is required for interaction with CBX5 and TBPL1; it reads EDILNGKENEIKELQQVISQQRQSFRNHMSDFRIQKQQETYMAQVLDQ. The tract at residues 182-205 is disordered; sequence VLDQKHKKTSGTRRARSRQCSREK. A compositionally biased stretch (basic residues) spans 186-205; sequence KHKKTSGTRRARSRQCSREK.

This sequence belongs to the SPATA24 family. Homodimer. Interacts with CBX3, CBX5, GMNN, GTF2B, TBPL1 and the polycomb proteins PHCF2, RNF2 and SCMH1 but not with CBX1 or PCGF2. As to expression, highly expressed in the testis and is mainly localized in the spermatids. Also expressed in the lung, heart, spleen and epididymis.

It is found in the cytoplasm. The protein localises to the nucleus. Its subcellular location is the nucleolus. It localises to the nucleoplasm. Functionally, binds DNA with high affinity but does not bind to TATA boxes. Synergises with GMNN and TBP in activation of TATA box-containing promoters and with GMNN and TBPL1 in activation of the NF1 TATA-less promoter. May play a role in cytoplasm movement and removal during spermiogenesis. This chain is Spermatogenesis-associated protein 24 (Spata24), found in Rattus norvegicus (Rat).